Here is a 510-residue protein sequence, read N- to C-terminus: Rab proteins geranylgeranyltransferase component A 1 (510 aa).

The protein belongs to the Rab GDI family. In terms of assembly, may interact with rab-5, rab-7 and rab-11. Does not interact with rab-3, rab-27 and rab-10. Expressed in several neurons including head neurons, motor neurons located in the ventral nerve cord, HSN and CAN neurons, and tail neurons, and in muscles such as body-wall, pharyngeal, intestinal and anal sphincter. Also expressed in seam cells, the hypodermis and the intestine.

It localises to the cytoplasm. Substrate-binding subunit of the Rab geranylgeranyltransferase (GGTase) complex. Binds unprenylated Rab proteins and presents the substrate peptide to the catalytic component B and remains bound to it after the geranylgeranyl transfer reaction. The component A is thought to be regenerated by transferring its prenylated Rab back to the donor membrane. Plays a role in neurotransmitter release from presynaptic terminals at neuromuscular junctions. Positively regulates the function of rab-27 in synaptic transmission most likely through mediating rab-27 prenylation. This is Rab proteins geranylgeranyltransferase component A 1 from Caenorhabditis elegans.